Consider the following 1316-residue polypeptide: DNA-directed RNA polymerase subunit beta' (1316 aa).

Zn(2+) contacts are provided by cysteine 60, cysteine 62, cysteine 75, and cysteine 78. Mg(2+)-binding residues include aspartate 535, aspartate 537, and aspartate 539. Positions 891, 968, 975, and 978 each coordinate Zn(2+).

Belongs to the RNA polymerase beta' chain family. As to quaternary structure, the RNAP catalytic core consists of 2 alpha, 1 beta, 1 beta' and 1 omega subunit. When a sigma factor is associated with the core the holoenzyme is formed, which can initiate transcription. Requires Mg(2+) as cofactor. The cofactor is Zn(2+).

It catalyses the reaction RNA(n) + a ribonucleoside 5'-triphosphate = RNA(n+1) + diphosphate. Functionally, DNA-dependent RNA polymerase catalyzes the transcription of DNA into RNA using the four ribonucleoside triphosphates as substrates. The protein is DNA-directed RNA polymerase subunit beta' of Mycobacterium leprae (strain Br4923).